The chain runs to 77 residues: Antitoxin VapB2 (77 aa).

The SpoVT-AbrB domain occupies 4–46; the sequence is ASVFMTNRSQAVRLPAEVRFSEEIKKLSVRVSGSDRILSPLNQ.

Belongs to the VapB family. Probably forms a complex with cognate toxin VapC2.

In terms of biological role, antitoxin component of a type II toxin-antitoxin (TA) system. Neutralizes the effect of cognate toxin VapC2 but not non-cognate toxin VapC2. The sequence is that of Antitoxin VapB2 from Haemophilus influenzae (strain 86-028NP).